The primary structure comprises 999 residues: Protein Smaug (999 aa).

The segment covering 1-37 has biased composition (polar residues); that stretch reads MKYATGTDNAMTSGISGQTNNSNSVSNEMQPTTSTPT. 3 disordered regions span residues 1–45, 50–69, and 321–370; these read MKYA…EATS, TATY…QSQP, and CSSV…GSSS. Residues 321–338 show a composition bias toward low complexity; sequence CSSVASSSMCPASGSRSS. Phosphoserine is present on residues Ser564 and Ser575. The segment at 583-763 is interaction with cup; that stretch reads EFKPNYIKFH…KDLKFKLSKM (181 aa). One can recognise an SAM domain in the interval 600–654; sequence GIGLWLKSLRLHKYIELFKNMTYEEMLLITEDFLQSVGVTKGASHKLALCIDKLK. Positions 773–892 are disordered; the sequence is HVKPAGVGPN…HHHAQQMQQM (120 aa). Polar residues-rich tracts occupy residues 801-822 and 854-864; these read KNGS…NFSL and HQPQYKSSSYP. Ser972 is subject to Phosphoserine.

This sequence belongs to the SMAUG family. In terms of assembly, interacts with oskar (osk). Binds to the 3'-UTR of nos. Interacts with cup, which in turn recruits eIF4-E, leading to an indirect interaction between smg and eIF4-E that prevents mRNA translation.

The protein resides in the cytoplasm. Translation regulator that binds to the 3'-UTR of specific mRNAs such as nanos (nos) and prevent their translation. Prevents translation of unlocalized nos in the bulk cytoplasm via the recruitment of cup. The sequence is that of Protein Smaug (smg) from Drosophila yakuba (Fruit fly).